The chain runs to 985 residues: Invasin (985 aa).

Positions 494–594 (SVTVQQPQLT…RQSVDTHFVK (101 aa)) are D1. Over 494-985 (SVTVQQPQLT…LAFPLCALAI (492 aa)) the chain is Extracellular. 2 consecutive Big-1 domains span residues 503-594 (TLTA…HFVK) and 601-691 (KSTL…VNFT). The segment at 595 to 694 (GTIAADKSTL…SVTVNFTADP (100 aa)) is D2. The tract at residues 695 to 794 (IPDAGRSSFT…LQKKISLFPV (100 aa)) is D3. The segment at 795 to 886 (PTLTGILVNG…YSVSYRFYPN (92 aa)) is D4. Residues 795–985 (PTLTGILVNG…LAFPLCALAI (191 aa)) form an integrin-binding region. Positions 887–985 (RWIYDGGTSL…LAFPLCALAI (99 aa)) are D5. Residues C906 and C981 are joined by a disulfide bond.

The protein belongs to the intimin/invasin family.

Its subcellular location is the cell surface. Invasin is a protein that allows enteric bacteria to penetrate cultured mammalian cells. The entry of invasin in the cell is mediated by binding several beta-1 chain integrins. The polypeptide is Invasin (Yersinia pseudotuberculosis serotype I (strain IP32953)).